The primary structure comprises 348 residues: MNNILSFEINEIRNILQGWGEPSYRADQIFDWIYKKLVLNPLDMTNLSKTLRQKLLEYFSFQIPKVVRITGDGNTKKYLLELEDGENIETVLISHKNRNTVCVSVQVGCPIGCKFCATGLIGLKRNLETHEIIGQLMVIQEDLEKKEEKISNVVYMGMGEPLANYDNVIKSIRIIKEEWGFNIGSKHITLSTIGIIPKIYQLAEENLKIRLAISLHASNNELRSKIIPINKEYPIEELLESAFYYAEKTGRRVTFEYVLIKNFNDRREDAKELVRLLKGKPAHVNLIPWNKVREYPWETSDLKDIFRFKEILANSGINVTLRISYGSKIKAGCGQLRALYLKNKGETI.

The active-site Proton acceptor is Glu89. In terms of domain architecture, Radical SAM core spans 95 to 328; the sequence is HKNRNTVCVS…VTLRISYGSK (234 aa). Cys102 and Cys333 form a disulfide bridge. The [4Fe-4S] cluster site is built by Cys109, Cys113, and Cys116. S-adenosyl-L-methionine contacts are provided by residues 159-160, Ser191, 214-216, and Asn290; these read GE and SLH. Cys333 (S-methylcysteine intermediate) is an active-site residue.

This sequence belongs to the radical SAM superfamily. RlmN family. [4Fe-4S] cluster is required as a cofactor.

The protein localises to the cytoplasm. The enzyme catalyses adenosine(2503) in 23S rRNA + 2 reduced [2Fe-2S]-[ferredoxin] + 2 S-adenosyl-L-methionine = 2-methyladenosine(2503) in 23S rRNA + 5'-deoxyadenosine + L-methionine + 2 oxidized [2Fe-2S]-[ferredoxin] + S-adenosyl-L-homocysteine. The catalysed reaction is adenosine(37) in tRNA + 2 reduced [2Fe-2S]-[ferredoxin] + 2 S-adenosyl-L-methionine = 2-methyladenosine(37) in tRNA + 5'-deoxyadenosine + L-methionine + 2 oxidized [2Fe-2S]-[ferredoxin] + S-adenosyl-L-homocysteine. In terms of biological role, specifically methylates position 2 of adenine 2503 in 23S rRNA and position 2 of adenine 37 in tRNAs. In Dictyoglomus turgidum (strain DSM 6724 / Z-1310), this protein is Probable dual-specificity RNA methyltransferase RlmN.